A 249-amino-acid chain; its full sequence is Probable transcriptional regulator ycf27 (249 aa).

The Response regulatory domain maps to 13–126; that stretch reads HLLIVDDENN…ELEARIQSIL (114 aa). Asp-62 carries the post-translational modification 4-aspartylphosphate. Positions 82-100 form a DNA-binding region, H-T-H motif; that stretch reads DIPIIMLTALEDVLDKVTG. A DNA-binding region (ompR/PhoB-type) is located at residues 142 to 246; it reads INLFKTGSLN…ARGTGYLCRK (105 aa).

It is found in the plastid. It localises to the chloroplast. Probable promoter-specific protein mediating the interaction between DNA and RNA polymerase. In Cyanidium caldarium (Red alga), this protein is Probable transcriptional regulator ycf27 (ycf27).